The chain runs to 87 residues: Small ribosomal subunit protein bS20 (87 aa).

It belongs to the bacterial ribosomal protein bS20 family.

Binds directly to 16S ribosomal RNA. The protein is Small ribosomal subunit protein bS20 of Corynebacterium urealyticum (strain ATCC 43042 / DSM 7109).